Here is a 449-residue protein sequence, read N- to C-terminus: Maltoporin (449 aa).

Residues 1–24 (MITLRKLPLAVAVAAGVMSAQAMA) form the signal peptide.

This sequence belongs to the porin LamB (TC 1.B.3) family. As to quaternary structure, homotrimer formed of three 18-stranded antiparallel beta-barrels, containing three independent channels.

It is found in the cell outer membrane. The catalysed reaction is beta-maltose(in) = beta-maltose(out). Functionally, involved in the transport of maltose and maltodextrins. The sequence is that of Maltoporin from Citrobacter koseri (strain ATCC BAA-895 / CDC 4225-83 / SGSC4696).